We begin with the raw amino-acid sequence, 535 residues long: Light-independent protochlorophyllide reductase subunit B (535 aa).

Position 36 (D36) interacts with [4Fe-4S] cluster. D292 (proton donor) is an active-site residue. 428–429 (GL) contacts substrate. The segment at 446–483 (DEASPSESAPHASNGHEDVAGGSTAQSVPSHAATEGDG) is disordered.

Belongs to the ChlB/BchB/BchZ family. In terms of assembly, protochlorophyllide reductase is composed of three subunits; BchL, BchN and BchB. Forms a heterotetramer of two BchB and two BchN subunits. The cofactor is [4Fe-4S] cluster.

The catalysed reaction is chlorophyllide a + oxidized 2[4Fe-4S]-[ferredoxin] + 2 ADP + 2 phosphate = protochlorophyllide a + reduced 2[4Fe-4S]-[ferredoxin] + 2 ATP + 2 H2O. The protein operates within porphyrin-containing compound metabolism; bacteriochlorophyll biosynthesis (light-independent). Component of the dark-operative protochlorophyllide reductase (DPOR) that uses Mg-ATP and reduced ferredoxin to reduce ring D of protochlorophyllide (Pchlide) to form chlorophyllide a (Chlide). This reaction is light-independent. The NB-protein (BchN-BchB) is the catalytic component of the complex. The chain is Light-independent protochlorophyllide reductase subunit B from Chlorobium limicola (strain DSM 245 / NBRC 103803 / 6330).